The following is a 139-amino-acid chain: Small ribosomal subunit protein uS11A (139 aa).

The interval 119 to 139 (DVTPIPTDSTRRKGGRRGRRL) is disordered. Residues 130–139 (RKGGRRGRRL) are compositionally biased toward basic residues.

The protein belongs to the universal ribosomal protein uS11 family. Component of the small ribosomal subunit (SSU). Mature yeast ribosomes consist of a small (40S) and a large (60S) subunit. The 40S small subunit contains 1 molecule of ribosomal RNA (18S rRNA) and at least 33 different proteins. The large 60S subunit contains 3 rRNA molecules (25S, 5.8S and 5S rRNA) and at least 46 different proteins. uS11 interacts with eS1 forming part of the mRNA exit tunnel. uS11 interacts with snoRNA U3. uS11 interacts with MPP10. Component of the ribosomal small subunit (SSU) processome composed of at least 40 protein subunits and snoRNA U3.

The protein resides in the cytoplasm. Its subcellular location is the nucleus. It is found in the nucleolus. In terms of biological role, component of the ribosome, a large ribonucleoprotein complex responsible for the synthesis of proteins in the cell. The small ribosomal subunit (SSU) binds messenger RNAs (mRNAs) and translates the encoded message by selecting cognate aminoacyl-transfer RNA (tRNA) molecules. The large subunit (LSU) contains the ribosomal catalytic site termed the peptidyl transferase center (PTC), which catalyzes the formation of peptide bonds, thereby polymerizing the amino acids delivered by tRNAs into a polypeptide chain. The nascent polypeptides leave the ribosome through a tunnel in the LSU and interact with protein factors that function in enzymatic processing, targeting, and the membrane insertion of nascent chains at the exit of the ribosomal tunnel. uS11 is involved in nucleolar processing of pre-18S ribosomal RNA and ribosome assembly. This chain is Small ribosomal subunit protein uS11A (rps1401), found in Schizosaccharomyces pombe (strain 972 / ATCC 24843) (Fission yeast).